The chain runs to 439 residues: 23S rRNA (uracil(1939)-C(5))-methyltransferase RlmD (439 aa).

Residues 5–63 (RKLEHKTYKLNIESFSHEGRGIAHFEDKIIFVSDALPGELVIANRTFSCAKFEEADAKE) enclose the TRAM domain. The [4Fe-4S] cluster site is built by Cys76, Cys82, Cys85, and Cys164. Residues Gln271, Phe300, Asn305, Glu321, Asp348, and Asp370 each contribute to the S-adenosyl-L-methionine site. Cys396 functions as the Nucleophile in the catalytic mechanism.

This sequence belongs to the class I-like SAM-binding methyltransferase superfamily. RNA M5U methyltransferase family. RlmD subfamily.

The enzyme catalyses uridine(1939) in 23S rRNA + S-adenosyl-L-methionine = 5-methyluridine(1939) in 23S rRNA + S-adenosyl-L-homocysteine + H(+). Functionally, catalyzes the formation of 5-methyl-uridine at position 1939 (m5U1939) in 23S rRNA. This is 23S rRNA (uracil(1939)-C(5))-methyltransferase RlmD from Vesicomyosocius okutanii subsp. Calyptogena okutanii (strain HA).